Reading from the N-terminus, the 473-residue chain is ATP synthase subunit beta (473 aa).

An ATP-binding site is contributed by 153-160 (GGAGVGKT).

This sequence belongs to the ATPase alpha/beta chains family. F-type ATPases have 2 components, CF(1) - the catalytic core - and CF(0) - the membrane proton channel. CF(1) has five subunits: alpha(3), beta(3), gamma(1), delta(1), epsilon(1). CF(0) has three main subunits: a(1), b(2) and c(9-12). The alpha and beta chains form an alternating ring which encloses part of the gamma chain. CF(1) is attached to CF(0) by a central stalk formed by the gamma and epsilon chains, while a peripheral stalk is formed by the delta and b chains.

Its subcellular location is the cell inner membrane. It catalyses the reaction ATP + H2O + 4 H(+)(in) = ADP + phosphate + 5 H(+)(out). Its function is as follows. Produces ATP from ADP in the presence of a proton gradient across the membrane. The catalytic sites are hosted primarily by the beta subunits. In Rickettsia akari (strain Hartford), this protein is ATP synthase subunit beta.